We begin with the raw amino-acid sequence, 98 residues long: MHGRLVTLKDIVLDLQPPDPVGLHCYEQLEDSSEDEVDKVDKQDAQPLTQHYQILTCCCGCDSNVRLVVECTDGDIRQLQDLLLGTLNIVCPICAPKP.

The E7 terminal domain stretch occupies residues 1–42; sequence MHGRLVTLKDIVLDLQPPDPVGLHCYEQLEDSSEDEVDKVDK. The LXCXE motif; interaction with host RB1 and TMEM173/STING signature appears at 23–27; that stretch reads LHCYE. Residues 58 to 94 fold into a zinc finger; the sequence is CCGCDSNVRLVVECTDGDIRQLQDLLLGTLNIVCPIC. The Nuclear export signal signature appears at 76-84; sequence IRQLQDLLL.

This sequence belongs to the papillomaviridae E7 protein family. Homodimer. Homooligomer. Interacts with host RB1; this interaction induces dissociation of RB1-E2F1 complex thereby disrupting RB1 activity. Interacts with host EP300; this interaction represses EP300 transcriptional activity. Interacts with protein E2; this interaction inhibits E7 oncogenic activity. Interacts with host TMEM173/STING; this interaction impairs the ability of TMEM173/STING to sense cytosolic DNA and promote the production of type I interferon (IFN-alpha and IFN-beta). Interacts with host ZUBR1. Post-translationally, highly phosphorylated.

Its subcellular location is the host cytoplasm. It localises to the host nucleus. Plays a role in viral genome replication by driving entry of quiescent cells into the cell cycle. Stimulation of progression from G1 to S phase allows the virus to efficiently use the cellular DNA replicating machinery to achieve viral genome replication. E7 protein has both transforming and trans-activating activities. Induces the disassembly of the E2F1 transcription factor from RB1, with subsequent transcriptional activation of E2F1-regulated S-phase genes. Interferes with host histone deacetylation mediated by HDAC1 and HDAC2, leading to transcription activation. Also plays a role in the inhibition of both antiviral and antiproliferative functions of host interferon alpha. Interaction with host TMEM173/STING impairs the ability of TMEM173/STING to sense cytosolic DNA and promote the production of type I interferon (IFN-alpha and IFN-beta). The sequence is that of Protein E7 from Homo sapiens (Human).